The sequence spans 159 residues: Ribosomal RNA large subunit methyltransferase H (159 aa).

Residues L76, G108, and 127–132 (FGLLTL) contribute to the S-adenosyl-L-methionine site.

Belongs to the RNA methyltransferase RlmH family. As to quaternary structure, homodimer.

It localises to the cytoplasm. It carries out the reaction pseudouridine(1915) in 23S rRNA + S-adenosyl-L-methionine = N(3)-methylpseudouridine(1915) in 23S rRNA + S-adenosyl-L-homocysteine + H(+). In terms of biological role, specifically methylates the pseudouridine at position 1915 (m3Psi1915) in 23S rRNA. This Streptococcus pyogenes serotype M3 (strain SSI-1) protein is Ribosomal RNA large subunit methyltransferase H.